We begin with the raw amino-acid sequence, 1146 residues long: uncharacterized protein (1146 aa).

This is an uncharacterized protein from Saccharum officinarum (Sugarcane).